The primary structure comprises 792 residues: Endonuclease MutS2 (792 aa).

334 to 341 (GPNTGGKT) contributes to the ATP binding site. Residues 717 to 792 (INLIGKTTDE…DAGVTIATFK (76 aa)) enclose the Smr domain.

This sequence belongs to the DNA mismatch repair MutS family. MutS2 subfamily. In terms of assembly, homodimer. Binds to stalled ribosomes, contacting rRNA.

Functionally, endonuclease that is involved in the suppression of homologous recombination and thus may have a key role in the control of bacterial genetic diversity. In terms of biological role, acts as a ribosome collision sensor, splitting the ribosome into its 2 subunits. Detects stalled/collided 70S ribosomes which it binds and splits by an ATP-hydrolysis driven conformational change. Acts upstream of the ribosome quality control system (RQC), a ribosome-associated complex that mediates the extraction of incompletely synthesized nascent chains from stalled ribosomes and their subsequent degradation. Probably generates substrates for RQC. This Agathobacter rectalis (strain ATCC 33656 / DSM 3377 / JCM 17463 / KCTC 5835 / VPI 0990) (Eubacterium rectale) protein is Endonuclease MutS2.